Consider the following 90-residue polypeptide: uncharacterized protein (90 aa).

3 helical membrane passes run 5–27 (FDIL…IIYI), 40–62 (IYLS…TFVA), and 67–89 (MSVV…YSIV).

The protein localises to the cell membrane. This is an uncharacterized protein from Archaeoglobus fulgidus (strain ATCC 49558 / DSM 4304 / JCM 9628 / NBRC 100126 / VC-16).